A 262-amino-acid chain; its full sequence is uncharacterized protein (262 aa).

A coiled-coil region spans residues 41–118 (ELQKNEKIDK…EEKAEDFINK (78 aa)).

This is an uncharacterized protein from Plasmodium falciparum (isolate 3D7).